The primary structure comprises 168 residues: Ribosome maturation factor RimM (168 aa).

The region spanning 95-168 (KEGDYYWTDL…IIVVEWDADF (74 aa)) is the PRC barrel domain.

The protein belongs to the RimM family. Binds ribosomal protein uS19.

The protein resides in the cytoplasm. Functionally, an accessory protein needed during the final step in the assembly of 30S ribosomal subunit, possibly for assembly of the head region. Essential for efficient processing of 16S rRNA. May be needed both before and after RbfA during the maturation of 16S rRNA. It has affinity for free ribosomal 30S subunits but not for 70S ribosomes. This Coxiella burnetii (strain CbuK_Q154) (Coxiella burnetii (strain Q154)) protein is Ribosome maturation factor RimM.